The following is a 544-amino-acid chain: Methionine--tRNA ligase (544 aa).

Positions 10-20 match the 'HIGH' region motif; it reads PYANGSLHLGH. Positions 141, 144, 153, and 156 each coordinate Zn(2+). A 'KMSKS' region motif is present at residues 329 to 333; sequence KLSTS. Thr-332 is a binding site for ATP.

This sequence belongs to the class-I aminoacyl-tRNA synthetase family. MetG type 1 subfamily. Monomer. Zn(2+) serves as cofactor.

It is found in the cytoplasm. It carries out the reaction tRNA(Met) + L-methionine + ATP = L-methionyl-tRNA(Met) + AMP + diphosphate. In terms of biological role, is required not only for elongation of protein synthesis but also for the initiation of all mRNA translation through initiator tRNA(fMet) aminoacylation. The protein is Methionine--tRNA ligase of Bacillus cereus (strain B4264).